The sequence spans 459 residues: UDP-N-acetylmuramate--L-alanine ligase (459 aa).

Residue 118-124 (GTHGKTT) coordinates ATP.

This sequence belongs to the MurCDEF family.

Its subcellular location is the cytoplasm. It catalyses the reaction UDP-N-acetyl-alpha-D-muramate + L-alanine + ATP = UDP-N-acetyl-alpha-D-muramoyl-L-alanine + ADP + phosphate + H(+). The protein operates within cell wall biogenesis; peptidoglycan biosynthesis. Functionally, cell wall formation. The protein is UDP-N-acetylmuramate--L-alanine ligase of Clostridium beijerinckii (strain ATCC 51743 / NCIMB 8052) (Clostridium acetobutylicum).